Here is a 960-residue protein sequence, read N- to C-terminus: Phosphoenolpyruvate carboxylase 1 (960 aa).

S7 is modified (phosphoserine). Residues H168 and K596 contribute to the active site.

Belongs to the PEPCase type 1 family. In terms of assembly, homotetramer. It depends on Mg(2+) as a cofactor.

Its subcellular location is the cytoplasm. It carries out the reaction oxaloacetate + phosphate = phosphoenolpyruvate + hydrogencarbonate. It participates in photosynthesis; C3 acid pathway. Its activity is regulated as follows. By light-reversible phosphorylation. In terms of biological role, through the carboxylation of phosphoenolpyruvate (PEP) it forms oxaloacetate, a four-carbon dicarboxylic acid source for the tricarboxylic acid cycle. This is Phosphoenolpyruvate carboxylase 1 (PEPC) from Sorghum bicolor (Sorghum).